Here is a 699-residue protein sequence, read N- to C-terminus: 1,4-alpha-glucan-branching enzyme (699 aa).

Substrate contacts are provided by residues 59–60 (NE) and 88–90 (WAP). Residue Trp104 participates in (1,4-alpha-D-glucosyl)n binding. 115–118 (DYGK) is a substrate binding site. (1,4-alpha-D-glucosyl)n is bound at residue Lys140. Phosphotyrosine is present on Tyr170. 330 to 333 (EVLR) provides a ligand contact to substrate. Asp354 functions as the Nucleophile in the catalytic mechanism. The Proton donor role is filled by Glu409.

Belongs to the glycosyl hydrolase 13 family. GlgB subfamily. In terms of assembly, monomer.

It catalyses the reaction Transfers a segment of a (1-&gt;4)-alpha-D-glucan chain to a primary hydroxy group in a similar glucan chain.. The protein operates within glycan biosynthesis; glycogen biosynthesis. In terms of biological role, glycogen-branching enzyme participates in the glycogen biosynthetic process along with glycogenin and glycogen synthase. Generates alpha-1,6-glucosidic branches from alpha-1,4-linked glucose chains, to increase solubility of the glycogen polymer. The protein is 1,4-alpha-glucan-branching enzyme (GBE1) of Equus caballus (Horse).